A 546-amino-acid polypeptide reads, in one-letter code: MFS-type transporter GME11371 (546 aa).

The next 7 membrane-spanning stretches (helical) occupy residues 39-59 (LTYLFLALILCMLLAVIDLTI), 77-96 (IGWYASVFFMTVASSQSSWG), 107-127 (MFLLAMGIFELGNVICGAAPT), 137-157 (ITGIGAAGVIAGCFTVAAFAV), 167-187 (GGLAATYGVGSSIGPIIGGVL), 195-215 (WCFYINLPIGGFAAIVLFLFF), and 240-260 (FPGFFCCIAAVTCLLLALLWG). Asn-267 carries an N-linked (GlcNAc...) asparagine glycan. A run of 7 helical transmembrane segments spans residues 270–290 (DVIGTLVGFFLFTALFAVVEW), 307–327 (VVLFGTIGGFFAGGAQFVLVY), 349–369 (LPYIIGSTITTIVAGTTISAT), 370–390 (GYFTPLIVGGGALWTVSAGLI), 402–422 (WIGYQALAGLAVGLCYQPPIL), 433–453 (VAATSAILLFFQTMGGAFMVS), and 509–529 (ISFAIIIALTGASTVAGIFMP).

It belongs to the major facilitator superfamily.

It localises to the cell membrane. It functions in the pathway secondary metabolite biosynthesis. Its function is as follows. MFS-type transporter; part of the gene cluster that mediates the biosynthesis of dibenzodioxocinones such as pestalotiollide B, a novel class of inhibitors against cholesterol ester transfer protein (CEPT). essential for dibenzodioxocinones biosynthesis and may be involved in the secretion of the cluster products. The chain is MFS-type transporter GME11371 from Pestalotiopsis microspora.